The chain runs to 1637 residues: Kinesin-like protein KIF21B (1637 aa).

A Kinesin motor domain is found at 8–370; it reads CVKVAVRIRP…LKYANRARNI (363 aa). 87–94 serves as a coordination point for ATP; the sequence is GQTGAGKT. Coiled coils occupy residues 376 to 604 and 631 to 824; these read VNQD…EEEG and NFQA…ALRR. The interval 400-1099 is interaction with TRIM3; that stretch reads MEYKAGKRVI…LQALIYNVQQ (700 aa). Residues 509 to 533 are compositionally biased toward low complexity; that stretch reads ASARSPYSLGASPAAPAFGGSPASS. 2 disordered regions span residues 509–538 and 552–628; these read ASARSPYSLGASPAAPAFGGSPASSMEDAS and KKKE…PEEK. Acidic residues predominate over residues 578-627; sequence NSEETDENEAEEEEEERDESGCEEEEGREDEDEDSGSEESLVDSDSDPEE. Serine 579 is subject to Phosphoserine. Position 582 is a phosphothreonine (threonine 582). Disordered regions lie at residues 830–865 and 880–906; these read SERVAGRAGLKPPMLDSGAEVSASTTSSEAESGARS and FLGDHPAPTVNGTRPARKKFQKKGASQ. Over residues 846-865 the composition is skewed to low complexity; it reads SGAEVSASTTSSEAESGARS. Residues 928–1016 are a coiled coil; that stretch reads MQRMTIVNLE…EETKEELDST (89 aa). Serine 1149, serine 1167, and serine 1215 each carry phosphoserine. Polar residues predominate over residues 1194–1217; it reads RTVSLPTRGSTFPRQSRATETSPL. Residues 1194-1251 form a disordered region; that stretch reads RTVSLPTRGSTFPRQSRATETSPLTRRKSYDRGQPIRSTDVGFTPPSSPPTRPRNDRN. Position 1237 is a phosphothreonine (threonine 1237). Phosphoserine is present on serine 1241. WD repeat units lie at residues 1306–1343, 1346–1384, 1410–1448, 1451–1493, 1502–1539, 1543–1582, and 1585–1622; these read GHTKPILCLDATDELLFTGSKDRSCKMWNLVTGQEIAA, GHPNNVVSIKYCSHSGLVFSVSTSYIKVWDIRDSAKCIR, QGEHQINQIALSPSGTMLYAASGNAVRIWELSRFQPVGK, GHIG…TGTI, PHYDGIECLAIQGDILFSGSRDNGIKKWDLDQQELIQQ, AHKDWVCALAFIPGRPMLLSACRAGVIKVWNVDNFTPIGE, and GHDSPINAICTNAKHIFTASSDCRVKLWNYVPGLTPCL.

Belongs to the TRAFAC class myosin-kinesin ATPase superfamily. Kinesin family. As to quaternary structure, interacts with TRIM3; the interaction positively affects motility of KIF21B. Interacts with GABARAP and GABA(A) receptor subunits: GABRG2, GABRA1 and GABRA2. May interact with GABA(A) receptor subunits: GABRB2 and GABRB3.

The protein localises to the cytoplasm. It localises to the cytoskeleton. The protein resides in the cell projection. It is found in the dendrite. Its subcellular location is the growth cone. The protein localises to the axon. It localises to the cytoplasmic vesicle. Plus-end directed microtubule-dependent motor protein which displays processive activity. Is involved in regulation of microtubule dynamics, synapse function and neuronal morphology, including dendritic tree branching and spine formation. Plays a role in lerning and memory. Involved in delivery of gamma-aminobutyric acid (GABA(A)) receptor to cell surface. The polypeptide is Kinesin-like protein KIF21B (KIF21B) (Homo sapiens (Human)).